The sequence spans 449 residues: Xylose isomerase (449 aa).

Residues histidine 103 and aspartate 106 contribute to the active site. Glutamate 234, glutamate 270, histidine 273, aspartate 298, aspartate 309, aspartate 311, and aspartate 342 together coordinate Mg(2+).

Belongs to the xylose isomerase family. Homotetramer. It depends on Mg(2+) as a cofactor.

The protein resides in the cytoplasm. It catalyses the reaction alpha-D-xylose = alpha-D-xylulofuranose. The polypeptide is Xylose isomerase (Levilactobacillus brevis (strain ATCC 367 / BCRC 12310 / CIP 105137 / JCM 1170 / LMG 11437 / NCIMB 947 / NCTC 947) (Lactobacillus brevis)).